The chain runs to 424 residues: Serine--tRNA ligase (424 aa).

231–233 (TAE) contributes to the L-serine binding site. ATP is bound at residue 262–264 (RSE). Glu-285 provides a ligand contact to L-serine. Position 349–352 (349–352 (EISS)) interacts with ATP. Ser-385 serves as a coordination point for L-serine.

The protein belongs to the class-II aminoacyl-tRNA synthetase family. Type-1 seryl-tRNA synthetase subfamily. Homodimer. The tRNA molecule binds across the dimer.

It localises to the cytoplasm. It catalyses the reaction tRNA(Ser) + L-serine + ATP = L-seryl-tRNA(Ser) + AMP + diphosphate + H(+). It carries out the reaction tRNA(Sec) + L-serine + ATP = L-seryl-tRNA(Sec) + AMP + diphosphate + H(+). The protein operates within aminoacyl-tRNA biosynthesis; selenocysteinyl-tRNA(Sec) biosynthesis; L-seryl-tRNA(Sec) from L-serine and tRNA(Sec): step 1/1. Its function is as follows. Catalyzes the attachment of serine to tRNA(Ser). Is also able to aminoacylate tRNA(Sec) with serine, to form the misacylated tRNA L-seryl-tRNA(Sec), which will be further converted into selenocysteinyl-tRNA(Sec). In Bacillus anthracis (strain A0248), this protein is Serine--tRNA ligase.